Here is a 277-residue protein sequence, read N- to C-terminus: Myelin proteolipid protein (277 aa).

Residues 2-10 (GLLECCARC) are Cytoplasmic-facing. 3 S-palmitoyl cysteine lipidation sites follow: C6, C7, and C10. A helical transmembrane segment spans residues 11 to 36 (LIGAPFASLVATGLCFFGVALFCGCG). Topologically, residues 37–59 (HEALTGTEQLIETYFSKNYQDYE) are extracellular. The chain crosses the membrane as a helical span at residues 60-88 (YLIDVIHAFQYVIYGTASFFFLYGALLLA). Residues 89-151 (EGFYTTGAVR…LGKWLGHPDK (63 aa)) lie on the Cytoplasmic side of the membrane. 3 S-palmitoyl cysteine lipidation sites follow: C109, C139, and C141. Residues 152–178 (FVGITYVLTIVWLLAFACSAVPVYIYF) traverse the membrane as a helical segment. The Extracellular portion of the chain corresponds to 179–238 (NTWTTCQSIAFPTKTTASIGTLCADARMYGVLPWNAFPGKVCGSNLLSICKTSEFQMTFH). 2 cysteine pairs are disulfide-bonded: C184-C228 and C201-C220. The O-palmitoyl threonine moiety is linked to residue T199. Residues 239–268 (LFIAAFVGAAATLVSLLTFMIAATYNFAVL) form a helical membrane-spanning segment. Residues 269–277 (KLMGRGTKF) are Cytoplasmic-facing.

It belongs to the myelin proteolipid protein family.

It is found in the cell membrane. In terms of biological role, this is the major myelin protein from the central nervous system. It plays an important role in the formation or maintenance of the multilamellar structure of myelin. The sequence is that of Myelin proteolipid protein (PLP1) from Gallus gallus (Chicken).